The primary structure comprises 142 residues: Maximins y/Hw (142 aa).

The N-terminal stretch at 1–18 is a signal peptide; the sequence is MIFKYIVAVSFLIASGYA. Positions 19-43 are excised as a propeptide; that stretch reads RSVKNDEQSLSQREVLEEESLREIR. Phe68 carries the post-translational modification Phenylalanine amide. Positions 72–121 are excised as a propeptide; it reads TAEDHEVMKRLEAVIRDLDSLDHSEEASERETRGFNQEEIANLFTKKEKR. An Isoleucine amide modification is found at Ile141.

This sequence belongs to the bombinin family. As to expression, expressed by the skin glands.

It localises to the secreted. Its function is as follows. Maximin-y shows antimicrobial activity against bacteria and against the fungus C.albicans. It has little hemolytic activity. Functionally, maximin-Hw shows antimicrobial activity against bacteria and against the fungus C.albicans. Shows strong hemolytic activity. This is Maximins y/Hw from Bombina maxima (Giant fire-bellied toad).